The sequence spans 314 residues: Olfactory receptor 5P6 (314 aa).

Over 1–28 the chain is Extracellular; it reads MAFQEDGNHTAVTEFVLFGLTDDPVLRV. The N-linked (GlcNAc...) asparagine glycan is linked to Asn8. A helical transmembrane segment spans residues 29 to 49; it reads ILFIIFLCIYLVTVSGNLSTI. The Cytoplasmic segment spans residues 50–57; it reads LLIRVSSQ. The helical transmembrane segment at 58–78 threads the bilayer; it reads LHHPMYFFLSHLAFADIGYSS. Residues 79-102 lie on the Extracellular side of the membrane; it reads SVTPNMLVNFLVERHTISYIGCAI. Cys100 and Cys192 are disulfide-bonded. The chain crosses the membrane as a helical span at residues 103 to 123; the sequence is QLGSVVFFGSSECFILAAMAY. Residues 124–136 are Cytoplasmic-facing; it reads DRFMAICNPLLYS. A helical transmembrane segment spans residues 137-157; it reads TKMSTQVCVQLLLIAYIGGFL. At 158 to 199 the chain is on the extracellular side; it reads NTWSFTICFYSLVFCGPNGVNHFFCDFAPLIELSCSDVSVPA. Residues 200–220 form a helical membrane-spanning segment; sequence TVPSFTAGSIIVVTVIVIAIS. Residues 221 to 240 are Cytoplasmic-facing; the sequence is YIYILITILKMHSTEGRQKA. Residues 241–261 traverse the membrane as a helical segment; that stretch reads FSTCTSHLTAVTLFYGTITFI. Residues 262 to 274 lie on the Extracellular side of the membrane; sequence YVMPKSSFSTDQN. A helical transmembrane segment spans residues 275–295; that stretch reads KVVSVFYMVVIPMLNPLIYSL. Residues 296–314 are Cytoplasmic-facing; the sequence is RNNEIKGALKRQIGRKIFS.

The protein belongs to the G-protein coupled receptor 1 family.

The protein localises to the cell membrane. Its function is as follows. Potential odorant receptor. The chain is Olfactory receptor 5P6 from Mus musculus (Mouse).